The primary structure comprises 370 residues: F-box protein At1g66490 (370 aa).

Positions 1–46 (MRTISDLPVALVEEILSRVPLTSLSAVRSTCKTWNALSKTQIFGKT) constitute an F-box domain.

This is F-box protein At1g66490 from Arabidopsis thaliana (Mouse-ear cress).